The primary structure comprises 342 residues: Succinylglutamate desuccinylase (342 aa).

Zn(2+) is bound by residues His-63, Glu-66, and His-155. The active site involves Glu-219.

This sequence belongs to the AspA/AstE family. Succinylglutamate desuccinylase subfamily. Requires Zn(2+) as cofactor.

It carries out the reaction N-succinyl-L-glutamate + H2O = L-glutamate + succinate. It participates in amino-acid degradation; L-arginine degradation via AST pathway; L-glutamate and succinate from L-arginine: step 5/5. Functionally, transforms N(2)-succinylglutamate into succinate and glutamate. The chain is Succinylglutamate desuccinylase from Vibrio campbellii (strain ATCC BAA-1116).